The following is a 602-amino-acid chain: Elongation factor 4 (602 aa).

The region spanning 7 to 189 (RNIRNFSIIA…AIVQRIPAPQ (183 aa)) is the tr-type G domain. GTP is bound by residues 19-24 (DHGKST) and 136-139 (NKID).

It belongs to the TRAFAC class translation factor GTPase superfamily. Classic translation factor GTPase family. LepA subfamily.

It localises to the cell inner membrane. The enzyme catalyses GTP + H2O = GDP + phosphate + H(+). In terms of biological role, required for accurate and efficient protein synthesis under certain stress conditions. May act as a fidelity factor of the translation reaction, by catalyzing a one-codon backward translocation of tRNAs on improperly translocated ribosomes. Back-translocation proceeds from a post-translocation (POST) complex to a pre-translocation (PRE) complex, thus giving elongation factor G a second chance to translocate the tRNAs correctly. Binds to ribosomes in a GTP-dependent manner. This Xylella fastidiosa (strain 9a5c) protein is Elongation factor 4.